A 151-amino-acid polypeptide reads, in one-letter code: UPF0735 ACT domain-containing protein SAUSA300_1599 (151 aa).

The ACT domain occupies 74–149 (TLILYVTDIV…YVSKVELISM (76 aa)).

Belongs to the UPF0735 family.

The protein is UPF0735 ACT domain-containing protein SAUSA300_1599 of Staphylococcus aureus (strain USA300).